A 107-amino-acid chain; its full sequence is Small ribosomal subunit protein bS6 (107 aa).

The protein belongs to the bacterial ribosomal protein bS6 family.

Functionally, binds together with bS18 to 16S ribosomal RNA. In Synechococcus elongatus (strain ATCC 33912 / PCC 7942 / FACHB-805) (Anacystis nidulans R2), this protein is Small ribosomal subunit protein bS6.